The chain runs to 336 residues: Peroxidase 72 (336 aa).

A signal peptide spans 1 to 23 (MAKSLNILIAALSLIAFSPFCLC). Cystine bridges form between C42/C122, C75/C80, C128/C329, and C207/C239. The Proton acceptor role is filled by H73. 5 residues coordinate Ca(2+): D74, V77, G79, D81, and S83. Position 170 (P170) interacts with substrate. N173 carries an N-linked (GlcNAc...) asparagine glycan. A heme b-binding site is contributed by H200. T201 provides a ligand contact to Ca(2+). An N-linked (GlcNAc...) asparagine glycan is attached at N216. The Ca(2+) site is built by D252, T255, and D260.

Belongs to the peroxidase family. Classical plant (class III) peroxidase subfamily. Heme b is required as a cofactor. It depends on Ca(2+) as a cofactor. As to expression, slightly expressed in roots.

It is found in the secreted. The enzyme catalyses 2 a phenolic donor + H2O2 = 2 a phenolic radical donor + 2 H2O. Removal of H(2)O(2), oxidation of toxic reductants, biosynthesis and degradation of lignin, suberization, auxin catabolism, response to environmental stresses such as wounding, pathogen attack and oxidative stress. These functions might be dependent on each isozyme/isoform in each plant tissue. This is Peroxidase 72 (PER72) from Arabidopsis thaliana (Mouse-ear cress).